Consider the following 475-residue polypeptide: Aspartyl/glutamyl-tRNA(Asn/Gln) amidotransferase subunit B (475 aa).

Belongs to the GatB/GatE family. GatB subfamily. In terms of assembly, heterotrimer of A, B and C subunits.

It carries out the reaction L-glutamyl-tRNA(Gln) + L-glutamine + ATP + H2O = L-glutaminyl-tRNA(Gln) + L-glutamate + ADP + phosphate + H(+). The catalysed reaction is L-aspartyl-tRNA(Asn) + L-glutamine + ATP + H2O = L-asparaginyl-tRNA(Asn) + L-glutamate + ADP + phosphate + 2 H(+). In terms of biological role, allows the formation of correctly charged Asn-tRNA(Asn) or Gln-tRNA(Gln) through the transamidation of misacylated Asp-tRNA(Asn) or Glu-tRNA(Gln) in organisms which lack either or both of asparaginyl-tRNA or glutaminyl-tRNA synthetases. The reaction takes place in the presence of glutamine and ATP through an activated phospho-Asp-tRNA(Asn) or phospho-Glu-tRNA(Gln). This is Aspartyl/glutamyl-tRNA(Asn/Gln) amidotransferase subunit B from Chlorobaculum tepidum (strain ATCC 49652 / DSM 12025 / NBRC 103806 / TLS) (Chlorobium tepidum).